We begin with the raw amino-acid sequence, 53 residues long: Conotoxin Cal9.2e (53 aa).

Residues 1–6 (KKGVTQ) constitute a propeptide that is removed on maturation. Intrachain disulfides connect Cys-15-Cys-32, Cys-20-Cys-42, and Cys-22-Cys-47.

Expressed by the venom duct.

The protein resides in the secreted. Its function is as follows. Probable neurotoxin with unknown target. Possibly targets ion channels. The chain is Conotoxin Cal9.2e from Californiconus californicus (California cone).